The chain runs to 432 residues: Asparagine--tRNA ligase (432 aa).

It belongs to the class-II aminoacyl-tRNA synthetase family. Homodimer.

It localises to the cytoplasm. The catalysed reaction is tRNA(Asn) + L-asparagine + ATP = L-asparaginyl-tRNA(Asn) + AMP + diphosphate + H(+). The protein is Asparagine--tRNA ligase of Limosilactobacillus reuteri (strain DSM 20016) (Lactobacillus reuteri).